A 353-amino-acid chain; its full sequence is Replication factor C subunit 2 (353 aa).

Methionine 1 bears the N-acetylmethionine mark. ATP-binding positions include valine 28, arginine 32, 65–73 (GPPGTGKTS), asparagine 171, and arginine 229.

Belongs to the activator 1 small subunits family. Replication factor C (RFC) is a heteropentamer of subunits RFC1, RFC2, RFC3, RFC4 and RFC5 and forms a complex with POL30/PCNA in the presence of ATP. Component of the RAD24-RFC complex which consists of RAD14, RFC2, RFC3, RFC4 and RFC5 and associates with the checkpoint clamp DDC1:MEC3:RAD17 complex. Component of the ELG1-RFC complex which consists of ELG1, RFC2, RFC3, RFC4 and RFC5. Component of the CTF18-RFC complex, which consists of CTF18, CTF8, DCC1, RFC2, RFC3, RFC4 and RFC5. RFC2 interacts with ECO1.

It localises to the nucleus. Component of ATP-dependent clamp loader (RFC and RFC-like) complexes for DNA clamps, such as the POL30/PCNA homotrimer and the checkpoint clamp DDC1:MEC3:RAD17 complex. During a clamp loading circle, the RFC:clamp complex binds to DNA and the recognition of the double-stranded/single-stranded junction stimulates ATP hydrolysis by RFC. The complex presumably provides bipartite ATP sites in which one subunit supplies a catalytic site for hydrolysis of ATP bound to the neighboring subunit. Dissociation of RFC from the clamp leaves the clamp encircling DNA. Component of the replication factor C (RFC or activator 1) complex which loads POL30/PCNA and acts during elongation of primed DNA templates by DNA polymerase delta and epsilon. RFC has an essential but redundant activity in sister chromatid cohesion establishment. Component of the RFC-like complex CTF18-RFC which is required for efficient establishment of chromosome cohesion during S-phase and may load or unload POL30/PCNA. Component of the RFC-like RAD24-RFC complex which loads the checkpoint clamp DDC1:MEC3:RAD17 complex and is involved in DNA repair pathways. Component of the RFC-like ELG1-RFC complex which appears to have a role in DNA replication, replication fork re-start, recombination and repair. RFC2 binds ATP and single-stranded DNA. The protein is Replication factor C subunit 2 (RFC2) of Saccharomyces cerevisiae (strain ATCC 204508 / S288c) (Baker's yeast).